A 226-amino-acid polypeptide reads, in one-letter code: UPF0758 protein LL1007 (226 aa).

Residues 103–225 (QVLSSREYGL…YFSFREEEIR (123 aa)) enclose the MPN domain. 3 residues coordinate Zn(2+): histidine 174, histidine 176, and aspartate 187. The short motif at 174–187 (HNHPSGNLKPSQAD) is the JAMM motif element.

This sequence belongs to the UPF0758 family.

The polypeptide is UPF0758 protein LL1007 (Lactococcus lactis subsp. lactis (strain IL1403) (Streptococcus lactis)).